A 612-amino-acid polypeptide reads, in one-letter code: Dihydroxy-acid dehydratase (612 aa).

Residue D81 coordinates Mg(2+). C122 contributes to the [2Fe-2S] cluster binding site. 2 residues coordinate Mg(2+): D123 and K124. K124 is modified (N6-carboxylysine). A [2Fe-2S] cluster-binding site is contributed by C195. E491 serves as a coordination point for Mg(2+). S517 serves as the catalytic Proton acceptor.

Belongs to the IlvD/Edd family. Homodimer. The cofactor is [2Fe-2S] cluster. Mg(2+) serves as cofactor.

The enzyme catalyses (2R)-2,3-dihydroxy-3-methylbutanoate = 3-methyl-2-oxobutanoate + H2O. It carries out the reaction (2R,3R)-2,3-dihydroxy-3-methylpentanoate = (S)-3-methyl-2-oxopentanoate + H2O. It functions in the pathway amino-acid biosynthesis; L-isoleucine biosynthesis; L-isoleucine from 2-oxobutanoate: step 3/4. Its pathway is amino-acid biosynthesis; L-valine biosynthesis; L-valine from pyruvate: step 3/4. Functions in the biosynthesis of branched-chain amino acids. Catalyzes the dehydration of (2R,3R)-2,3-dihydroxy-3-methylpentanoate (2,3-dihydroxy-3-methylvalerate) into 2-oxo-3-methylpentanoate (2-oxo-3-methylvalerate) and of (2R)-2,3-dihydroxy-3-methylbutanoate (2,3-dihydroxyisovalerate) into 2-oxo-3-methylbutanoate (2-oxoisovalerate), the penultimate precursor to L-isoleucine and L-valine, respectively. In Rhizobium leguminosarum bv. trifolii (strain WSM2304), this protein is Dihydroxy-acid dehydratase.